A 125-amino-acid polypeptide reads, in one-letter code: Basic leucine zipper transcriptional factor ATF-like (125 aa).

A compositionally biased stretch (low complexity) spans 1–14; it reads MPHSSDSSDSSFSR. Residues 1-58 are disordered; that stretch reads MPHSSDSSDSSFSRSPPPGKQDSSDDVRRVQRREKNRIAAQKSRQRQTQKADTLHLES. Positions 26-89 constitute a bZIP domain; that stretch reads DVRRVQRREK…KYFTSVLNSH (64 aa). The segment at 28-50 is basic motif; it reads RRVQRREKNRIAAQKSRQRQTQK. S43 is subject to Phosphoserine. T48 carries the post-translational modification Phosphothreonine. A leucine-zipper region spans residues 54–75; the sequence is LHLESEDLEKQNAALRKEIKQL.

It belongs to the bZIP family. In terms of assembly, heterodimer; mainly heterodimerizes with JUNB. The BATF-JUNB heterodimer interacts with IRF4 and IRF8. Interacts (via bZIP domain) with IRF4 and IRF8; the interaction is direct. Also forms heterodimers with JUN and JUND. Also interacts with IFI35. Phosphorylated on serine and threonine residues and at least one tyrosine residue. Phosphorylation at Ser-43 inhibit DNA binding activity and transforms it as a negative regulator of AP-1 mediated transcription. In terms of processing, phosphorylated. As to expression, expressed at highest levels in lung, and at lower levels in placenta, liver, kidney, spleen, and peripheral blood. Detected in SW480 colorectal cancer cell line and several hematopoietic tumor cell lines, including Raji Burkitt's lymphoma. Strongly expressed in mature B- and T-lymphocytes. Also expressed in moderate levels in lymph node and appendix and at low levels in thymus and bone marrow.

The protein resides in the nucleus. The protein localises to the cytoplasm. In terms of biological role, AP-1 family transcription factor that controls the differentiation of lineage-specific cells in the immune system: specifically mediates the differentiation of T-helper 17 cells (Th17), follicular T-helper cells (TfH), CD8(+) dendritic cells and class-switch recombination (CSR) in B-cells. Acts via the formation of a heterodimer with JUNB that recognizes and binds DNA sequence 5'-TGA[CG]TCA-3'. The BATF-JUNB heterodimer also forms a complex with IRF4 (or IRF8) in immune cells, leading to recognition of AICE sequence (5'-TGAnTCA/GAAA-3'), an immune-specific regulatory element, followed by cooperative binding of BATF and IRF4 (or IRF8) and activation of genes. Controls differentiation of T-helper cells producing interleukin-17 (Th17 cells) by binding to Th17-associated gene promoters: regulates expression of the transcription factor RORC itself and RORC target genes such as IL17 (IL17A or IL17B). Also involved in differentiation of follicular T-helper cells (TfH) by directing expression of BCL6 and MAF. In B-cells, involved in class-switch recombination (CSR) by controlling the expression of both AICDA and of germline transcripts of the intervening heavy-chain region and constant heavy-chain region (I(H)-C(H)). Following infection, can participate in CD8(+) dendritic cell differentiation via interaction with IRF4 and IRF8 to mediate cooperative gene activation. Regulates effector CD8(+) T-cell differentiation by regulating expression of SIRT1. Following DNA damage, part of a differentiation checkpoint that limits self-renewal of hematopoietic stem cells (HSCs): up-regulated by STAT3, leading to differentiation of HSCs, thereby restricting self-renewal of HSCs. The sequence is that of Basic leucine zipper transcriptional factor ATF-like (BATF) from Homo sapiens (Human).